Reading from the N-terminus, the 478-residue chain is UDP-N-acetylmuramate--L-alanine ligase (478 aa).

ATP is bound at residue 125–131 (GTHGKTT).

It belongs to the MurCDEF family.

The protein resides in the cytoplasm. It carries out the reaction UDP-N-acetyl-alpha-D-muramate + L-alanine + ATP = UDP-N-acetyl-alpha-D-muramoyl-L-alanine + ADP + phosphate + H(+). It functions in the pathway cell wall biogenesis; peptidoglycan biosynthesis. Cell wall formation. The polypeptide is UDP-N-acetylmuramate--L-alanine ligase (Dichelobacter nodosus (strain VCS1703A)).